A 147-amino-acid polypeptide reads, in one-letter code: Acidic phospholipase A2 S7-48J (147 aa).

The first 19 residues, 1-19 (MYPAHLLVLLAVCVSLLGA), serve as a signal peptide directing secretion. A propeptide spanning residues 20-27 (SDIPPQPL) is cleaved from the precursor. Intrachain disulfides connect C38/C99, C54/C146, C56/C72, C71/C127, C78/C120, C88/C113, and C106/C118. Y55, G57, and G59 together coordinate Ca(2+). H75 is an active-site residue. D76 lines the Ca(2+) pocket. Residue D121 is part of the active site.

Belongs to the phospholipase A2 family. Group I subfamily. D49 sub-subfamily. The cofactor is Ca(2+). In terms of tissue distribution, expressed by the venom gland.

The protein localises to the secreted. The enzyme catalyses a 1,2-diacyl-sn-glycero-3-phosphocholine + H2O = a 1-acyl-sn-glycero-3-phosphocholine + a fatty acid + H(+). In terms of biological role, snake venom phospholipase A2 (PLA2) that inhibits collagen-induced platelet aggregation. PLA2 catalyzes the calcium-dependent hydrolysis of the 2-acyl groups in 3-sn-phosphoglycerides. This is Acidic phospholipase A2 S7-48J from Austrelaps superbus (Lowland copperhead snake).